We begin with the raw amino-acid sequence, 328 residues long: Nickel import system permease protein NikB (328 aa).

6 helical membrane passes run 11–31 (LMQM…LMKL), 104–124 (LLIS…LGII), 139–159 (VIST…LLFI), 170–190 (ILSQ…AYII), 229–249 (ILPI…GTVV), and 279–299 (VLFI…LTLL). Positions 100–297 (APITLLISFS…IINTIADLLT (198 aa)) constitute an ABC transmembrane type-1 domain.

Belongs to the binding-protein-dependent transport system permease family. OppBC subfamily. The complex is composed of two ATP-binding proteins (NikD and NikE), two transmembrane proteins (NikB and NikC) and a solute-binding protein (NikA).

Its subcellular location is the cell membrane. Functionally, part of the ABC transporter complex NikABCDE (Opp2) involved in nickel import. Probably responsible for the translocation of the substrate across the membrane. The sequence is that of Nickel import system permease protein NikB from Staphylococcus aureus (strain MSSA476).